Here is a 312-residue protein sequence, read N- to C-terminus: Ribosomal RNA small subunit methyltransferase H (312 aa).

Residues 35–37, D55, F79, D100, and Q107 each bind S-adenosyl-L-methionine; that span reads GGH.

It belongs to the methyltransferase superfamily. RsmH family.

The protein localises to the cytoplasm. It carries out the reaction cytidine(1402) in 16S rRNA + S-adenosyl-L-methionine = N(4)-methylcytidine(1402) in 16S rRNA + S-adenosyl-L-homocysteine + H(+). Functionally, specifically methylates the N4 position of cytidine in position 1402 (C1402) of 16S rRNA. The sequence is that of Ribosomal RNA small subunit methyltransferase H from Azoarcus sp. (strain BH72).